The chain runs to 103 residues: Co-chaperonin GroES (103 aa).

The protein belongs to the GroES chaperonin family. Heptamer of 7 subunits arranged in a ring. Interacts with the chaperonin GroEL.

It localises to the cytoplasm. Its function is as follows. Together with the chaperonin GroEL, plays an essential role in assisting protein folding. The GroEL-GroES system forms a nano-cage that allows encapsulation of the non-native substrate proteins and provides a physical environment optimized to promote and accelerate protein folding. GroES binds to the apical surface of the GroEL ring, thereby capping the opening of the GroEL channel. In Gloeothece citriformis (strain PCC 7424) (Cyanothece sp. (strain PCC 7424)), this protein is Co-chaperonin GroES.